Here is a 337-residue protein sequence, read N- to C-terminus: Holliday junction branch migration complex subunit RuvB (337 aa).

The interval 1 to 180 (MTRLISADKS…FGVISRLEFY (180 aa)) is large ATPase domain (RuvB-L). ATP contacts are provided by residues L19, R20, G61, K64, T65, T66, 127-129 (EDF), R170, Y180, and R217. Mg(2+) is bound at residue T65. The segment at 181–251 (THEELAFIIT…VADQALALLE (71 aa)) is small ATPAse domain (RuvB-S). The segment at 254 to 337 (DMGFDMMDRA…APEPPQGKLF (84 aa)) is head domain (RuvB-H). DNA contacts are provided by R309 and R314.

It belongs to the RuvB family. In terms of assembly, homohexamer. Forms an RuvA(8)-RuvB(12)-Holliday junction (HJ) complex. HJ DNA is sandwiched between 2 RuvA tetramers; dsDNA enters through RuvA and exits via RuvB. An RuvB hexamer assembles on each DNA strand where it exits the tetramer. Each RuvB hexamer is contacted by two RuvA subunits (via domain III) on 2 adjacent RuvB subunits; this complex drives branch migration. In the full resolvosome a probable DNA-RuvA(4)-RuvB(12)-RuvC(2) complex forms which resolves the HJ.

It is found in the cytoplasm. The enzyme catalyses ATP + H2O = ADP + phosphate + H(+). The RuvA-RuvB-RuvC complex processes Holliday junction (HJ) DNA during genetic recombination and DNA repair, while the RuvA-RuvB complex plays an important role in the rescue of blocked DNA replication forks via replication fork reversal (RFR). RuvA specifically binds to HJ cruciform DNA, conferring on it an open structure. The RuvB hexamer acts as an ATP-dependent pump, pulling dsDNA into and through the RuvAB complex. RuvB forms 2 homohexamers on either side of HJ DNA bound by 1 or 2 RuvA tetramers; 4 subunits per hexamer contact DNA at a time. Coordinated motions by a converter formed by DNA-disengaged RuvB subunits stimulates ATP hydrolysis and nucleotide exchange. Immobilization of the converter enables RuvB to convert the ATP-contained energy into a lever motion, pulling 2 nucleotides of DNA out of the RuvA tetramer per ATP hydrolyzed, thus driving DNA branch migration. The RuvB motors rotate together with the DNA substrate, which together with the progressing nucleotide cycle form the mechanistic basis for DNA recombination by continuous HJ branch migration. Branch migration allows RuvC to scan DNA until it finds its consensus sequence, where it cleaves and resolves cruciform DNA. In Citrifermentans bemidjiense (strain ATCC BAA-1014 / DSM 16622 / JCM 12645 / Bem) (Geobacter bemidjiensis), this protein is Holliday junction branch migration complex subunit RuvB.